The sequence spans 228 residues: Ribonuclease H (228 aa).

In terms of domain architecture, RNase H type-1 spans 2–142 (GPMRTIVYAD…ADRLATLGRR (141 aa)). Residues Asp-11, Glu-49, Asp-71, and Asp-134 each coordinate Mg(2+).

This sequence belongs to the RNase H family. In terms of assembly, monomer. Requires Mg(2+) as cofactor.

It is found in the cytoplasm. The catalysed reaction is Endonucleolytic cleavage to 5'-phosphomonoester.. Functionally, endonuclease that specifically degrades the RNA of RNA-DNA hybrids. The sequence is that of Ribonuclease H from Methylorubrum extorquens (strain PA1) (Methylobacterium extorquens).